A 427-amino-acid polypeptide reads, in one-letter code: Mucorpepsin (427 aa).

The first 22 residues, 1 to 22 (MLFSKISSAILLTAASFALTSA), serve as a signal peptide directing secretion. A propeptide spans 23–66 (RPVSKQSDADDKLLALPLTSVNRKYSQTKHGQQAAEKLGGIKAF) (activation peptide). One can recognise a Peptidase A1 domain in the interval 86 to 418 (YAIPVSIGTP…DFGKNRIGFA (333 aa)). Asp104 is an active-site residue. Cys117 and Cys123 are disulfide-bonded. Residue Asn254 is glycosylated (N-linked (GlcNAc...) asparagine). Residue Asp303 is part of the active site. Cysteines 338 and 382 form a disulfide.

This sequence belongs to the peptidase A1 family.

The enzyme catalyses Hydrolysis of proteins, favoring hydrophobic residues at P1 and P1'. Clots milk. Does not accept Lys at P1, and hence does not activate trypsinogen.. Functionally, this enzyme, capable of clotting milk is frequently used for cheese production. This Rhizomucor pusillus protein is Mucorpepsin.